The following is a 401-amino-acid chain: S-adenosylmethionine synthase (401 aa).

136-141 (GTGSSD) provides a ligand contact to ATP. A disordered region spans residues 278-305 (GDDGSVGRGNRSNGLITPSRPMSMEATS).

This sequence belongs to the AdoMet synthase 2 family. Mg(2+) serves as cofactor.

The catalysed reaction is L-methionine + ATP + H2O = S-adenosyl-L-methionine + phosphate + diphosphate. It participates in amino-acid biosynthesis; S-adenosyl-L-methionine biosynthesis; S-adenosyl-L-methionine from L-methionine: step 1/1. In terms of biological role, catalyzes the formation of S-adenosylmethionine from methionine and ATP. This Methanococcoides burtonii (strain DSM 6242 / NBRC 107633 / OCM 468 / ACE-M) protein is S-adenosylmethionine synthase.